Reading from the N-terminus, the 247-residue chain is MEAPRGWLVIMISVLAVSLASSAAQDTCRDLDGRDGAARKPGRPGRPGPKGERGEPGAPAFQTGIRGLKGDQGESGSPGKPGRMGYPGPSGPPGLPGLPGLKGIKGNPGNIKDQRRPAFSAVRQNPPTSGNVVIFDEVITNQEGAYKSQLGQFICDVPGYYYFTFQVVSKWDLCLYIMSSRRDQVQQSLGFCDFNSKGLFQVVSGGTVLQLQRGDKVWIQRDPNKGRIYQGSEADSVFSGFLIFPST.

The signal sequence occupies residues 1–24; it reads MEAPRGWLVIMISVLAVSLASSAA. A disordered region spans residues 26–116; it reads DTCRDLDGRD…NPGNIKDQRR (91 aa). A compositionally biased stretch (basic and acidic residues) spans 27–38; it reads TCRDLDGRDGAA. In terms of domain architecture, Collagen-like spans 33–111; the sequence is GRDGAARKPG…KGIKGNPGNI (79 aa). 2 positions are modified to 4-hydroxyproline: P41 and P47. K50 bears the 5-hydroxylysine mark. An O-linked (Gal...) hydroxylysine glycan is attached at K50. 4-hydroxyproline is present on residues P56 and P59. The residue at position 69 (K69) is a 5-hydroxylysine. K69 is a glycosylation site (O-linked (Gal...) hydroxylysine). Residues P81 and P87 each carry the 4-hydroxyproline modification. Residues 98 to 109 are compositionally biased toward low complexity; it reads LPGLKGIKGNPG. K102 carries the post-translational modification 5-hydroxylysine. K102 is a glycosylation site (O-linked (Gal...) hydroxylysine). Residues 112–247 form the C1q domain; sequence KDQRRPAFSA…FSGFLIFPST (136 aa). An intrachain disulfide couples C174 to C192. Q201 provides a ligand contact to Ca(2+).

Core component of the complement C1 complex, a calcium-dependent complex composed of 1 molecule of the C1Q subcomplex, 2 molecules of C1R and 2 molecules of C1S. The C1Q subcomplex is composed 18 subunits: 3 chains of C1QA, C1QB, and C1QC trimerize to form 6 collagen-like triple helices connected to six globular ligand-recognition modules (C1q domain). Interacts with CR1 (via Sushi 24 and Sushi 25 domains). Interacts (via C-terminus) with CD33; this interaction activates CD33 inhibitory motifs. O-linked glycans are assumed to be the Glc-Gal disaccharides typically found as secondary modifications of hydroxylated lysines in collagen-like domains.

It localises to the secreted. The protein resides in the cell surface. With respect to regulation, the C1Q subcomplex is inhibited by sulfated molecules, such as triterpenoid sulfates, heparan sulfate, or chondroitin sulfates. Core component of the complement C1 complex, a multiprotein complex that initiates the classical pathway of the complement system, a cascade of proteins that leads to phagocytosis and breakdown of pathogens and signaling that strengthens the adaptive immune system. The classical complement pathway is initiated by the C1Q subcomplex of the C1 complex, which specifically binds IgG or IgM immunoglobulins complexed with antigens, forming antigen-antibody complexes on the surface of pathogens: C1QA, together with C1QB and C1QC, specifically recognizes and binds the Fc regions of IgG or IgM via its C1q domain. Immunoglobulin-binding activates the proenzyme C1R, which cleaves C1S, initiating the proteolytic cascade of the complement system. The C1Q subcomplex is activated by a hexamer of IgG complexed with antigens, while it is activated by a pentameric IgM. The C1Q subcomplex also recognizes and binds phosphatidylserine exposed on the surface of cells undergoing programmed cell death, possibly promoting activation of the complement system. This chain is Complement C1q subcomponent subunit A (C1QA), found in Sus scrofa (Pig).